The chain runs to 2624 residues: Transcription factor TFIIIB component B'' homolog (2624 aa).

Residues 1-142 (MFRRARLSVK…TKEKQPCSDR (142 aa)) are disordered. Residues 1 to 299 (MFRRARLSVK…TYSSFRKNYY (299 aa)) form an interaction with ZBTB43 region. The span at 63–77 (PQEKAPRSSTEKTGG) shows a compositional bias: basic and acidic residues. The segment covering 99 to 119 (SSTSSLVKSSVSVPSESHPLS) has biased composition (low complexity). Positions 120 to 132 (TINQEAPQPTATS) are enriched in polar residues. Positions 133 to 142 (TKEKQPCSDR) are enriched in basic and acidic residues. A coiled-coil region spans residues 144-177 (RIYKAQKLREMLKEELRKEKKQWKNKYAINESQR). The tract at residues 193 to 241 (LPDNNPMTSSLEQEKKTEKPSTPVQTREQEGKSTPNAEDNEMEEETDDG) is disordered. Polar residues predominate over residues 212 to 229 (PSTPVQTREQEGKSTPNA). Acidic residues predominate over residues 230–240 (EDNEMEEETDD). The Myb-like domain occupies 295-345 (RKNYYSKPWSNKETDMFFLAISMVGTDFSMIGQLFPHRARIEIKNKFKREE). The tract at residues 355 to 470 (AFQEKRPFDF…QKKRRRKKQD (116 aa)) is required for phosphorylation by CSNK2A1. Disordered regions lie at residues 379–449 (EKRK…SRED), 544–567 (LSLS…TSDL), 606–663 (ENVK…MNTL), and 729–759 (EEIG…SRKD). Over residues 397–407 (TKPRKNVKVKK) the composition is skewed to basic residues. A compositionally biased stretch (low complexity) spans 552–565 (ATSVATESSESSTS). 2 stretches are compositionally biased toward basic and acidic residues: residues 637–663 (TESE…MNTL) and 736–759 (EKNE…SRKD). The stretch at 823–877 (GRREISSKEEVLEKILVSGEMAAALRETVRLDTSPKEMVPAEINTKEMQSDLKET) is one 1; approximate repeat. The segment at 823–1327 (GRREISSKEE…PRENELEETS (505 aa)) is 9 X 55 AA repeats of G-R-R-X-I-S-P-X-E-N-G-X-E-E-V-K-P-X-X-E-M-E-T-D-L-K-X-T-G-R-E-X-X-X-R-E-K-T-X-E-X-X-D-A-X-E-E-I-D-X-D-L-E-E-T. 6 repeat units span residues 878-932 (GRRA…LEEA), 933-987 (GRRE…LEET), 988-1040 (GRRK…LEET), 1041-1094 (EREV…LEET), 1095-1148 (EREI…LEET), and 1149-1203 (GRRE…LEET). Thr915 carries the post-translational modification Phosphothreonine. Basic and acidic residues-rich tracts occupy residues 930 to 957 (EEAG…ETDL) and 979 to 1006 (EIDK…KPVD). The disordered stretch occupies residues 930–1222 (EEAGRREISP…GPEEVKPVGK (293 aa)). Positions 1030–1041 (DATEEIDLEETE) are enriched in acidic residues. Residues 1052–1079 (EEVKPLGEMETDLKATGRDSFPRGKTPE) are compositionally biased toward basic and acidic residues. Residues 1078-1103 (PEVIDAIEEIEIDLEETEREISPQEN) adopt a coiled-coil conformation. The segment covering 1082–1095 (DAIEEIEIDLEETE) has biased composition (acidic residues). The segment covering 1120–1133 (ATGREISPREKTPE) has biased composition (basic and acidic residues). Residues 1136 to 1145 (DATEEIDKDL) show a composition bias toward acidic residues. A compositionally biased stretch (basic and acidic residues) spans 1161–1190 (EEVKPVDEMETDLKTTGREGSSREKTREVI). Acidic residues predominate over residues 1194–1204 (EVIETDLEETE). One copy of the 8; approximate repeat lies at 1204–1257 (EREISPQENGPEEVKPVGKMETDLKEIREEISQREKVLAEFSAIREKEIDLKET). A coiled-coil region spans residues 1223-1284 (METDLKEIRE…VEEMEADLKE (62 aa)). A 9; approximate repeat occupies 1258–1327 (GKRDIPIMEK…PRENELEETS (70 aa)). The span at 1306–1321 (AELKQTGKTDISPREN) shows a compositional bias: basic and acidic residues. Disordered stretches follow at residues 1306–1348 (AELK…SAVP), 1365–1440 (TPVE…RFKR), 1519–1543 (TERN…VQKN), 1684–1722 (KAKP…LQKG), 1819–1863 (STSE…ASKA), 2130–2164 (GAEM…ENKD), 2181–2200 (SEVN…QEVH), 2207–2241 (VASS…GDSV), 2444–2501 (FQSR…SRPG), and 2519–2566 (SDEP…PSPS). Residues 1326–1344 (TSTSRQTDTHLMQSGSNDF) are compositionally biased toward polar residues. A compositionally biased stretch (basic and acidic residues) spans 1366 to 1378 (PVEEKRNSEKEVS). Composition is skewed to polar residues over residues 1379–1390 (SHFSHFKISSQT), 1411–1421 (SDINLSKSLPQ), and 1519–1529 (TERNLSPSNSC). Positions 1695-1719 (KKEEPVLEKVTTDQSKEGKPEDHLL) are enriched in basic and acidic residues. Basic residues predominate over residues 1844–1853 (RGSKRVRGKT). Basic and acidic residues predominate over residues 2131 to 2151 (AEMETQRETEKNASKATELEN). Residues 2470–2479 (VSDKEERTDA) are compositionally biased toward basic and acidic residues. The segment covering 2488–2498 (SRTSSSKASLS) has biased composition (low complexity). Positions 2526-2544 (HSKKRLKPLIPGLRKKLKR) are enriched in basic residues.

In terms of assembly, component of TFIIIB complex. The TFIIIB complex has two activities, alpha and beta. The TFIIIB-alpha and TFIIIB-beta activities are required for transcription of genes with TFIIIC-bound internal promoters and PSE transcription factor-bound external promoters, respectively. The TFIIIB-alpha activity complex is composed of TBP, BDP1, and a complex containing both BRF2 and at least four stably associated proteins; YY1 facilitates the formation of TFIIIB-alpha activity complex. The TFIIIB-beta activity complex is composed of TBP, BDP1, and BRF1. Interacts with BRF1; this interaction diminishes during mitosis resulting in the release of BDP1 from chromosomal templates. Component of TFIIIC complex. The TFIIIC complex has two activities, C1 and C2. The TFIIIC2 activity complex is only required for transcription of the 'classical' pol III genes whereas the TFIIIC1 activity complex is required for transcription of all pol III genes. The TFIIIC1 activity complex is composed at least of BDP1. Interacts with ZBTB43. In terms of processing, phosphorylated by CSNK2A1 during mitosis, resulting in its release from chromatin and suppression of polymerase III transcription. Isoform 2 is highly expressed in cerebellum.

Its subcellular location is the nucleus. General activator of RNA polymerase III transcription. Requires for transcription from all three types of polymerase III promoters. Requires for transcription of genes with internal promoter elements and with promoter elements upstream of the initiation site. The chain is Transcription factor TFIIIB component B'' homolog (BDP1) from Homo sapiens (Human).